The chain runs to 249 residues: Probable transcriptional regulatory protein ACIAD2052 (249 aa).

It belongs to the TACO1 family.

It localises to the cytoplasm. This chain is Probable transcriptional regulatory protein ACIAD2052, found in Acinetobacter baylyi (strain ATCC 33305 / BD413 / ADP1).